Reading from the N-terminus, the 744-residue chain is Deleted in azoospermia protein 1 (744 aa).

Over residues 1 to 10 (MSAANPETPN) the composition is skewed to polar residues. Positions 1 to 27 (MSAANPETPNSTISREASTQSSSAAAS) are disordered. A compositionally biased stretch (low complexity) spans 11–27 (STISREASTQSSSAAAS). The RRM 1 domain maps to 40-115 (NTVFVGGIDA…KKLKLGPAIR (76 aa)). The span at 163 to 175 (QHVQSAANPETPN) shows a compositional bias: polar residues. A disordered region spans residues 163–192 (QHVQSAANPETPNSTISREASTQSSSAAAS). Positions 176-192 (STISREASTQSSSAAAS) are enriched in low complexity. Positions 205-280 (NTVFVGGIDA…KKLKLGPAIR (76 aa)) constitute an RRM 2 domain. A compositionally biased stretch (polar residues) spans 328-340 (QHVQSAANPETPN). The disordered stretch occupies residues 328 to 357 (QHVQSAANPETPNSTISREASTQSSSAAAS). Over residues 341-357 (STISREASTQSSSAAAS) the composition is skewed to low complexity. The RRM 3 domain occupies 370–445 (NTVFVGGIDA…KKLKLGPAIR (76 aa)). 9 consecutive DAZ domains span residues 497 to 520 (AYSAYPHSPGQVITGCQLLVYNYQ), 521 to 544 (EYPTYPDSAFQVTTGYQLPVYNYQ), 545 to 568 (PFPAYPRSPFQVTAGYQLPVYNYQ), 569 to 592 (AFPAYPNSPFQVATGYQFPVYNYQ), 593 to 616 (PFPAYPSSPFQVTAGYQLPVYNYQ), 617 to 640 (AFPAYPNSPFQVATGYQFPVYNYQ), 641 to 664 (AFPAYPNSPVQVTTGYQLPVYNYQ), 665 to 688 (AFPAYPSSPFQVTTGYQLPVYNYQ), and 689 to 712 (AFPAYPNSAVQVTTGYQFHVYNYQ).

The protein belongs to the RRM DAZ family. Forms a heterodimer with BOLL and DAZL. Interacts with PUM2, DAZAP1, DAZAP2, DZIP1 and DZIP3. As to expression, testis-specific. Expression restricted to premeiotic germ cells, particularly in spermatogonia (at protein level).

The protein localises to the cytoplasm. It is found in the nucleus. Functionally, RNA-binding protein that plays an essential role in spermatogenesis. May act by binding to the 3'-UTR of mRNAs and regulating their translation. Promotes germ-cell progression to meiosis and formation of haploid germ cells. The polypeptide is Deleted in azoospermia protein 1 (DAZ1) (Homo sapiens (Human)).